The chain runs to 382 residues: Tuliposide A-converting enzyme 2, chloroplastic (382 aa).

The transit peptide at 1-74 (MSVASFFSSL…PSPSLSPTPT (74 aa)) directs the protein to the chloroplast. The Acyl-ester intermediate role is filled by Ser-232. Active-site charge relay system residues include Asp-324 and His-356.

This sequence belongs to the AB hydrolase superfamily. In terms of assembly, homodimer. Expressed in roots, stems, leaves, petals, stamens and pistils, but not in bulb scales.

The protein localises to the plastid. Its subcellular location is the chloroplast. It catalyses the reaction 6-tuliposide A = tulipalin A + D-glucose. Inhibited by NaF, AgNO(3), HgCl(2), CuSO(4) and phenylmethylsulfonyl fluoride (PMSF). In terms of biological role, lactone-forming carboxylesterases, specifically catalyzing intramolecular transesterification, but not hydrolysis. Involved in the biosynthesis of tulipalins, defensive chemicals that show antimicrobial activities against a broad range of strains of bacteria and fungi. Substrates are 6-tuliposide A &gt; 6-tuliposide B. The sequence is that of Tuliposide A-converting enzyme 2, chloroplastic (TCEA2) from Tulipa gesneriana (Garden tulip).